A 192-amino-acid chain; its full sequence is Ion-translocating oxidoreductase complex subunit A (192 aa).

Helical transmembrane passes span 5–25, 39–59, 65–85, 102–122, 134–154, and 171–191; these read LLLL…FLGL, IGMS…SYLV, LPFD…AVVV, ALGI…VALL, AIYG…FSAM, and AIAM…TGLV.

The protein belongs to the NqrDE/RnfAE family. The complex is composed of six subunits: RnfA, RnfB, RnfC, RnfD, RnfE and RnfG.

It is found in the cell inner membrane. In terms of biological role, part of a membrane-bound complex that couples electron transfer with translocation of ions across the membrane. The chain is Ion-translocating oxidoreductase complex subunit A from Shewanella baltica (strain OS185).